A 100-amino-acid polypeptide reads, in one-letter code: MITKEAAQKIAKLARLKFEEDTVEKFFTQLSTIMDMIDILNEIDCKDIEPLTSVCNMNARMREDAVTSSDLSSELFDNVSGNSTQLAKEVKYFITPKVVE.

This sequence belongs to the GatC family. As to quaternary structure, heterotrimer of A, B and C subunits.

The catalysed reaction is L-glutamyl-tRNA(Gln) + L-glutamine + ATP + H2O = L-glutaminyl-tRNA(Gln) + L-glutamate + ADP + phosphate + H(+). It carries out the reaction L-aspartyl-tRNA(Asn) + L-glutamine + ATP + H2O = L-asparaginyl-tRNA(Asn) + L-glutamate + ADP + phosphate + 2 H(+). Its function is as follows. Allows the formation of correctly charged Asn-tRNA(Asn) or Gln-tRNA(Gln) through the transamidation of misacylated Asp-tRNA(Asn) or Glu-tRNA(Gln) in organisms which lack either or both of asparaginyl-tRNA or glutaminyl-tRNA synthetases. The reaction takes place in the presence of glutamine and ATP through an activated phospho-Asp-tRNA(Asn) or phospho-Glu-tRNA(Gln). The protein is Aspartyl/glutamyl-tRNA(Asn/Gln) amidotransferase subunit C of Rickettsia rickettsii (strain Sheila Smith).